Reading from the N-terminus, the 151-residue chain is uncharacterized protein (151 aa).

The protein to M.jannaschii MJ1244 and MJ1245.

This is an uncharacterized protein from Methanothermobacter thermautotrophicus (strain ATCC 29096 / DSM 1053 / JCM 10044 / NBRC 100330 / Delta H) (Methanobacterium thermoautotrophicum).